A 301-amino-acid polypeptide reads, in one-letter code: MITVVTVPATTANLGPGFDCLGAALTLTNRFTFSLSDRPHVSVRGPEAAAVSSGPNNLAYRAYSRFYEYLGREAPPVYLEIDLRVPLARGLGSSATAIIGGLVGANRLAGFPLSHTEVLELAIEMEGHPDNVVPALLGGCRLAVQEDAGGWHWLEIPWDQDVVPILAIPDFELATETAREVLPPHCAYGDAIFNISHLGALLRGLETGQREWLQLALADRLHQPYRQSLIKGYPDLHRAALEAGAHGLVISGAGPTLLALGDPVTASAIATALKETWAKFDVQAQVEILAIQHQGTTVCDR.

86–96 (PLARGLGSSAT) provides a ligand contact to ATP.

It belongs to the GHMP kinase family. Homoserine kinase subfamily.

It is found in the cytoplasm. The enzyme catalyses L-homoserine + ATP = O-phospho-L-homoserine + ADP + H(+). The protein operates within amino-acid biosynthesis; L-threonine biosynthesis; L-threonine from L-aspartate: step 4/5. Functionally, catalyzes the ATP-dependent phosphorylation of L-homoserine to L-homoserine phosphate. The sequence is that of Homoserine kinase from Thermosynechococcus vestitus (strain NIES-2133 / IAM M-273 / BP-1).